Here is a 480-residue protein sequence, read N- to C-terminus: F-box/LRR-repeat protein 14 (480 aa).

The F-box domain maps to 11–58 (DRQMDELPDHLVWDILSKLHTTDDRNSLSLSCKRFFSLDNEQRYSLRI). 15 LRR repeats span residues 61–86 (GLVP…EIIY), 94–119 (GKQV…TLSF), 120–144 (CTFI…KLNF), 145–170 (APRI…HLIR), 171–196 (CLNV…CIKN), 197–222 (CRAI…QFEV), 229–257 (MKVY…SLGN), 258–283 (CIIA…HLDM), 284–309 (CTGV…SLRV), 322–347 (TLRL…KISF), 355–379 (LFSF…SLDH), 380–404 (VCVF…ELVH), 405–429 (CQEV…KLSK), 430–454 (CLGV…VVED), and 455–480 (CPQV…SWMY).

In Arabidopsis thaliana (Mouse-ear cress), this protein is F-box/LRR-repeat protein 14 (FBL14).